The primary structure comprises 434 residues: Trigger factor (434 aa).

Positions 161–246 constitute a PPIase FKBP-type domain; it reads KDIVTIDFKG…IHKVEEPQLP (86 aa).

It belongs to the FKBP-type PPIase family. Tig subfamily.

It localises to the cytoplasm. It catalyses the reaction [protein]-peptidylproline (omega=180) = [protein]-peptidylproline (omega=0). In terms of biological role, involved in protein export. Acts as a chaperone by maintaining the newly synthesized protein in an open conformation. Functions as a peptidyl-prolyl cis-trans isomerase. This chain is Trigger factor, found in Marinobacter nauticus (strain ATCC 700491 / DSM 11845 / VT8) (Marinobacter aquaeolei).